The following is a 514-amino-acid chain: Alanine--glyoxylate aminotransferase 2, mitochondrial (514 aa).

A mitochondrion-targeting transit peptide spans 1 to 41 (MTLIWRHLLRPLCLVTSAPRILEMHPFLSLGTSRTSVTKLS). An N6-acetyllysine; alternate modification is found at lysine 71. N6-succinyllysine; alternate is present on lysine 71. The residue at position 84 (lysine 84) is an N6-acetyllysine. An N6-acetyllysine; alternate modification is found at lysine 262. N6-succinyllysine; alternate is present on lysine 262. The residue at position 304 (lysine 304) is an N6-succinyllysine. Lysine 350 is modified (N6-(pyridoxal phosphate)lysine). N6-acetyllysine; alternate is present on residues lysine 417 and lysine 420. Lysine 417 and lysine 420 each carry N6-succinyllysine; alternate.

This sequence belongs to the class-III pyridoxal-phosphate-dependent aminotransferase family. In terms of assembly, homotetramer. Pyridoxal 5'-phosphate serves as cofactor. Expressed in the convoluted tubule in the kidney and in the liver hepatocytes (at protein level).

It is found in the mitochondrion. It carries out the reaction glyoxylate + L-alanine = glycine + pyruvate. The enzyme catalyses (R)-3-amino-2-methylpropanoate + pyruvate = 2-methyl-3-oxopropanoate + L-alanine. The catalysed reaction is 3-oxopropanoate + L-alanine = beta-alanine + pyruvate. It catalyses the reaction 2-oxobutanoate + L-alanine = (2S)-2-aminobutanoate + pyruvate. It carries out the reaction N(omega),N(omega)-dimethyl-L-arginine + pyruvate = 5-(3,3-dimethylguanidino)-2-oxopentanoate + L-alanine. The enzyme catalyses N(omega),N('omega)-dimethyl-L-arginine + pyruvate = 5-(3,3'-dimethylguanidino)-2-oxopentanoate + L-alanine. The catalysed reaction is N(omega),N(omega)-dimethyl-L-arginine + glyoxylate = 5-(3,3-dimethylguanidino)-2-oxopentanoate + glycine. It catalyses the reaction N(omega),N('omega)-dimethyl-L-arginine + glyoxylate = 5-(3,3'-dimethylguanidino)-2-oxopentanoate + glycine. It carries out the reaction N(omega)-methyl-L-arginine + pyruvate = 5-(3-methylguanidino)-2-oxopentanoate + L-alanine. The enzyme catalyses N(omega)-methyl-L-arginine + glyoxylate = 5-(3-methylguanidino)-2-oxopentanoate + glycine. The catalysed reaction is L-ornithine + pyruvate = 5-amino-2-oxopentanoate + L-alanine. It catalyses the reaction L-ornithine + glyoxylate = 5-amino-2-oxopentanoate + glycine. It carries out the reaction (2S)-2-aminobutanoate + glyoxylate = 2-oxobutanoate + glycine. The enzyme catalyses N(omega),N(omega)-dimethyl-L-arginine + oxaloacetate = 5-(3,3-dimethylguanidino)-2-oxopentanoate + L-aspartate. The catalysed reaction is oxaloacetate + L-alanine = L-aspartate + pyruvate. It catalyses the reaction N(omega),N(omega)-dimethyl-L-arginine + 2-oxobutanoate = 5-(3,3-dimethylguanidino)-2-oxopentanoate + (2S)-2-aminobutanoate. It carries out the reaction 2-oxopentanoate + N(omega),N(omega)-dimethyl-L-arginine = 5-(3,3-dimethylguanidino)-2-oxopentanoate + L-2-aminopentanoate. The enzyme catalyses 2-oxohexanoate + N(omega),N(omega)-dimethyl-L-arginine = L-2-aminohexanoate + 5-(3,3-dimethylguanidino)-2-oxopentanoate. Its function is as follows. Multifunctional aminotransferase with a broad substrate specificity. Catalyzes the conversion of glyoxylate to glycine using alanine as the amino donor. Catalyzes metabolism of not L- but the D-isomer of D-beta-aminoisobutyric acid to generate 2-methyl-3-oxopropanoate and alanine. Catalyzes the transfer of the amino group from beta-alanine to pyruvate to yield L-alanine and 3-oxopropanoate. Can metabolize NG-monomethyl-L-arginine (NMMA), asymmetric NG,NG-dimethyl-L-arginine (ADMA) and symmetric NG,N'G-dimethyl-L-arginine (SDMA). ADMA is a potent inhibitor of nitric-oxide (NO) synthase, and this activity provides mechanism through which the kidney regulates blood pressure. The sequence is that of Alanine--glyoxylate aminotransferase 2, mitochondrial (AGXT2) from Homo sapiens (Human).